The chain runs to 2116 residues: Non-structural polyprotein p200 (2116 aa).

The tract at residues 36–49 is required for efficient proteolysis and P150-P90 interaction; it reads EVRDVVTAAQKRAI. The region spanning 57–247 is the Alphavirus-like MT domain; sequence VFTQMQVSDH…TRPCTTRIYQ (191 aa). A compositionally biased stretch (basic and acidic residues) spans 457-467; that stretch reads GPLEDGGRHLD. Disordered stretches follow at residues 457–477 and 712–805; these read GPLE…SPPR and AGPR…ADPD. 2 stretches are compositionally biased toward pro residues: residues 721 to 730 and 745 to 776; these read SPPPGDPPPP and TPPP…PIPA. 3 short sequence motifs (pxxPxR; class II SH3-binding) span residues 727–732, 747–752, and 761–766; these read PPPPRR, PPAPAR, and PPAPPR. One can recognise a Macro domain in the interval 806-985; that stretch reads SDIVESYARA…LTHASVLVGA (180 aa). The segment at 992–1031 is disordered; it reads VSPPPTEPLASCPAGDPGRPAQRSASPPATPLGDATAPEP. The Peptidase C27 domain occupies 1000-1301; sequence LASCPAGDPG…WLAVPLSRGG (302 aa). Residue Cys1152 is the For cysteine protease activity of the active site. The interval 1152-1183 is interaction with host CALM1; it reads CWLRAAANVAQAARACGAYTSAGCPKCAYGRA. Residues Cys1175, Cys1178, Cys1227, and His1273 each contribute to the Zn(2+) site. The tract at residues 1193–1228 is EF-hand-like; that stretch reads FAALSQRWSASHADASPDGTGDPLDPLMETVGCACS. His1273 serves as the catalytic For cysteine protease activity. A (+)RNA virus helicase ATP-binding domain is found at 1320–1468; the sequence is EVRRLGDDAM…VPDRWPTERS (149 aa). Residue 1352–1359 coordinates a ribonucleoside 5'-triphosphate; that stretch reads MAAGAGKT. Residues 1469 to 1609 enclose the (+)RNA virus helicase C-terminal domain; the sequence is RHTWRFPDCW…ELKEVPAGID (141 aa). Residues 1700-1900 form an involved in P150-P90 interaction region; sequence YRAGEDGSTL…VELEISAALL (201 aa). The RdRp catalytic domain occupies 1870–1981; it reads TNAIEVDFTE…FLPEGARSAA (112 aa). Residues 1902-1906 carry the Human RB1 binding motif; the sequence is LPCAE.

Interacts with RNA-directed RNA polymerase p90. Interacts with host CALM1; this interaction is necessary for the protease activity and viral infectivity. Interacts with host C1QBP. Interacts with the capsid protein. In terms of assembly, interacts with human RB1/retinoblastoma protein. Interacts with protease/methyltransferase p150. Zn(2+) serves as cofactor. Post-translationally, specific enzymatic cleavage by its own cysteine protease yield mature proteins p150 and p90.

It localises to the host membrane. It is found in the host cytoplasm. The protein resides in the host perinuclear region. The enzyme catalyses RNA(n) + a ribonucleoside 5'-triphosphate = RNA(n+1) + diphosphate. The catalysed reaction is a ribonucleoside 5'-triphosphate + H2O = a ribonucleoside 5'-diphosphate + phosphate + H(+). It catalyses the reaction ATP + H2O = ADP + phosphate + H(+). Probable principal replicase for the negative-strand DNA, which replicates the 40S (+) genomic RNA into (-) antigenomic RNA. It cannot replicate the (-) into (+) until cleaved into p150 and p90 mature proteins. Functionally, protease that cleaves the precursor polyprotein into two mature products. Together with RNA-directed RNA polymerase p90, replicates the 40S genomic and antigenomic RNA by recognizing replications specific signals. The heterodimer P150/p90 is probably the principal replicase for positive-strand genomic RNA and the 24S subgenomic RNA, which codes for structural proteins. Responsible for the mRNA-capping of the viral mRNAs. This function is necessary since all viral RNAs are synthesized in the cytoplasm, and host capping enzymes are restricted to the nucleus. Forms fibers late in the infection that may be involved in cell-to-cell spread of the virus RNA in the absence of virus particle formation. Its function is as follows. Together with protease/methyltransferase p150, replicates the 40S genomic and antigenomic RNA by recognizing replications specific signals. The heterodimer P150/p90 is probably the principal replicase for positive-strand genomic RNA and the 24S subgenomic RNA, which codes for structural proteins. A helicase activity is probably also present. This is Non-structural polyprotein p200 from Rubella virus (strain Therien) (RUBV).